Reading from the N-terminus, the 304-residue chain is Meiotically up-regulated gene 86 protein (304 aa).

Residues 1-12 (MSSNPSRSNSRS) are compositionally biased toward low complexity. The disordered stretch occupies residues 1–23 (MSSNPSRSNSRSKNGDLESGLKF). The next 6 helical transmembrane spans lie at 93–113 (PAPFGLSAFAFTTFLLSLFNV), 123–143 (MVTAPAAFYGGLAQLLASMWE), 150–170 (FGGAVFGSYGCFWLSYASIFI), 188–208 (AIGLYLICWFIFTFLVLLCTV), 212–232 (LAFFSLFMSLDVCFLLLACAF), and 247–267 (VGGAFGIFSACAAWYNAMAGL).

It belongs to the acetate uptake transporter (AceTr) (TC 2.A.96) family.

The protein resides in the endoplasmic reticulum membrane. It is found in the golgi apparatus. Its subcellular location is the golgi stack membrane. It localises to the vacuole membrane. Functionally, has a role in meiosis. The protein is Meiotically up-regulated gene 86 protein (mug86) of Schizosaccharomyces pombe (strain 972 / ATCC 24843) (Fission yeast).